A 311-amino-acid polypeptide reads, in one-letter code: Coproporphyrin III ferrochelatase 1 (311 aa).

Fe-coproporphyrin III is bound by residues tyrosine 12, arginine 29, 45 to 46 (RY), serine 53, and tyrosine 124. Fe(2+) contacts are provided by histidine 182 and glutamate 263.

This sequence belongs to the ferrochelatase family.

It is found in the cytoplasm. The catalysed reaction is Fe-coproporphyrin III + 2 H(+) = coproporphyrin III + Fe(2+). It participates in porphyrin-containing compound metabolism; protoheme biosynthesis. Its function is as follows. Involved in coproporphyrin-dependent heme b biosynthesis. Catalyzes the insertion of ferrous iron into coproporphyrin III to form Fe-coproporphyrin III. This chain is Coproporphyrin III ferrochelatase 1, found in Bacillus cereus (strain ATCC 14579 / DSM 31 / CCUG 7414 / JCM 2152 / NBRC 15305 / NCIMB 9373 / NCTC 2599 / NRRL B-3711).